The chain runs to 444 residues: uncharacterized protein (444 aa).

The Radical SAM core domain occupies 164 to 381 (GAYGKSFLLE…EKALKKEGIR (218 aa)). [4Fe-4S] cluster contacts are provided by cysteine 178, cysteine 182, and cysteine 185.

[4Fe-4S] cluster serves as cofactor.

This is an uncharacterized protein from Methanocaldococcus jannaschii (strain ATCC 43067 / DSM 2661 / JAL-1 / JCM 10045 / NBRC 100440) (Methanococcus jannaschii).